The primary structure comprises 158 residues: NAD(P)H-quinone oxidoreductase subunit J, chloroplastic (158 aa).

It belongs to the complex I 30 kDa subunit family. In terms of assembly, NDH is composed of at least 16 different subunits, 5 of which are encoded in the nucleus.

Its subcellular location is the plastid. The protein localises to the chloroplast thylakoid membrane. The enzyme catalyses a plastoquinone + NADH + (n+1) H(+)(in) = a plastoquinol + NAD(+) + n H(+)(out). It catalyses the reaction a plastoquinone + NADPH + (n+1) H(+)(in) = a plastoquinol + NADP(+) + n H(+)(out). Functionally, NDH shuttles electrons from NAD(P)H:plastoquinone, via FMN and iron-sulfur (Fe-S) centers, to quinones in the photosynthetic chain and possibly in a chloroplast respiratory chain. The immediate electron acceptor for the enzyme in this species is believed to be plastoquinone. Couples the redox reaction to proton translocation, and thus conserves the redox energy in a proton gradient. The sequence is that of NAD(P)H-quinone oxidoreductase subunit J, chloroplastic from Gossypium barbadense (Sea Island cotton).